Reading from the N-terminus, the 348-residue chain is MKFLDLAKVYIRSGAGGNGCVSFRREKFIEYGGPDGGDGGKGGSVWAEAVDGLNTLIDFRYQQHFFAKNGQSGMGRQRSGKDGDEIVLRVPVGTEILDEDEETVLADLTHVGERVLLAKGGNGGFGNLHFKSSTNQAPRRANSGQEGVERTIWLRLKLIADAGLLGLPNAGKSTFLSSTSNARPKIADYPFTTLHPNLGVVGIDNTEFVMADIPGLIEGAHEGRGIGDRFLGHVERCAVLLHLVDGTSETVAEDYRTIINELEAYGGELASKPRVTALNKIDALDDEERAEARAALEAEVGAPVLMMSSVSREGLDLVLRAVRAEIDDDRLRIKQAEASEEEDTPWQP.

The 159-residue stretch at 1 to 159 (MKFLDLAKVY…RTIWLRLKLI (159 aa)) folds into the Obg domain. An OBG-type G domain is found at 160-327 (ADAGLLGLPN…VLRAVRAEID (168 aa)). Residues 166–173 (GLPNAGKS), 191–195 (FTTLH), 212–215 (DIPG), 279–282 (NKID), and 308–310 (SSV) contribute to the GTP site. The Mg(2+) site is built by serine 173 and threonine 193.

This sequence belongs to the TRAFAC class OBG-HflX-like GTPase superfamily. OBG GTPase family. In terms of assembly, monomer. The cofactor is Mg(2+).

The protein localises to the cytoplasm. An essential GTPase which binds GTP, GDP and possibly (p)ppGpp with moderate affinity, with high nucleotide exchange rates and a fairly low GTP hydrolysis rate. Plays a role in control of the cell cycle, stress response, ribosome biogenesis and in those bacteria that undergo differentiation, in morphogenesis control. This chain is GTPase Obg, found in Ruegeria sp. (strain TM1040) (Silicibacter sp.).